We begin with the raw amino-acid sequence, 509 residues long: Histidine--tRNA ligase (509 aa).

This sequence belongs to the class-II aminoacyl-tRNA synthetase family. As to quaternary structure, homodimer.

The protein resides in the cytoplasm. It catalyses the reaction tRNA(His) + L-histidine + ATP = L-histidyl-tRNA(His) + AMP + diphosphate + H(+). The chain is Histidine--tRNA ligase from Rhodopseudomonas palustris (strain TIE-1).